The following is a 410-amino-acid chain: Chitin deacetylase 3 (410 aa).

An N-terminal signal peptide occupies residues 1-18; the sequence is MYGHLSLSTLSLLAVVAA. A propeptide spanning residues 19–39 is cleaved from the precursor; the sequence is APFHESWLQPRDSDVSQLFRR. N-linked (GlcNAc...) asparagine glycosylation is found at Asn61 and Asn80. Residues 124–314 enclose the NodB homology domain; the sequence is KVWALSFDDG…KAVANGWSVK (191 aa). Catalysis depends on Asp131, which acts as the Proton acceptor. Asp131 is an acetate binding site. Asp132 lines the Co(2+) pocket. N-linked (GlcNAc...) asparagine glycosylation occurs at Asn149. 2 residues coordinate Co(2+): His183 and His187. Tyr225 lines the acetate pocket. N-linked (GlcNAc...) asparagine glycosylation occurs at Asn279. Catalysis depends on His289, which acts as the Proton donor. An N-linked (GlcNAc...) asparagine glycan is attached at Asn293. A lipid anchor (GPI-anchor amidated serine) is attached at Ser385. A propeptide spans 386–410 (removed in mature form); the sequence is SSWPIANRPSLFVIACGLALAAIMV.

The protein belongs to the polysaccharide deacetylase family. Co(2+) serves as cofactor.

It localises to the cell membrane. The enzyme catalyses [(1-&gt;4)-N-acetyl-beta-D-glucosaminyl](n) + n H2O = chitosan + n acetate. Its function is as follows. Hydrolyzes the N-acetamido groups of N-acetyl-D-glucosamine residues in chitin to form chitosan and acetate. Chitosan is required to anchor melanin to the cell wall, for maintenance of cell wall integrity, and for proper cytokinesis. Chitosan offers an advantage during infection as it is less readily detected than chitin by host immunosurveillance mechanisms. The polypeptide is Chitin deacetylase 3 (Cryptococcus neoformans var. neoformans serotype D (strain B-3501A) (Filobasidiella neoformans)).